The following is a 175-amino-acid chain: Gamma-crystallin B (175 aa).

Beta/gamma crystallin 'Greek key' domains are found at residues 2–40 (GKIT…RVDS) and 41–83 (GCWM…RLIP). K3 carries N-linked (Glc) (glycation) lysine; in vitro glycosylation. A disulfide bridge links C19 with C23. Positions 84-88 (QHTGT) are connecting peptide. Beta/gamma crystallin 'Greek key' domains are found at residues 89–129 (FRMR…NVLE) and 130–172 (GSWV…RRVM).

Belongs to the beta/gamma-crystallin family.

Functionally, crystallins are the dominant structural components of the vertebrate eye lens. This chain is Gamma-crystallin B (CRYGB), found in Bos taurus (Bovine).